The sequence spans 131 residues: Protein NrdI (131 aa).

It belongs to the NrdI family.

Probably involved in ribonucleotide reductase function. The protein is Protein NrdI of Bacillus licheniformis (strain ATCC 14580 / DSM 13 / JCM 2505 / CCUG 7422 / NBRC 12200 / NCIMB 9375 / NCTC 10341 / NRRL NRS-1264 / Gibson 46).